A 448-amino-acid chain; its full sequence is N-succinylarginine dihydrolase (448 aa).

Substrate contacts are provided by residues 19–28 (GGLSYGNVAS), asparagine 110, and 137–138 (HR). The active site involves glutamate 174. Position 214 (arginine 214) interacts with substrate. Residue histidine 250 is part of the active site. Substrate is bound by residues aspartate 252 and asparagine 365. Residue cysteine 371 is the Nucleophile of the active site.

It belongs to the succinylarginine dihydrolase family. In terms of assembly, homodimer.

It catalyses the reaction N(2)-succinyl-L-arginine + 2 H2O + 2 H(+) = N(2)-succinyl-L-ornithine + 2 NH4(+) + CO2. It functions in the pathway amino-acid degradation; L-arginine degradation via AST pathway; L-glutamate and succinate from L-arginine: step 2/5. Catalyzes the hydrolysis of N(2)-succinylarginine into N(2)-succinylornithine, ammonia and CO(2). The protein is N-succinylarginine dihydrolase of Pseudomonas fluorescens (strain SBW25).